Here is a 492-residue protein sequence, read N- to C-terminus: Probable cobyric acid synthase (492 aa).

The GATase cobBQ-type domain maps to Pro-252–Phe-444. The active-site Nucleophile is Cys-330. Residue His-436 is part of the active site.

The protein belongs to the CobB/CobQ family. CobQ subfamily.

Its pathway is cofactor biosynthesis; adenosylcobalamin biosynthesis. Its function is as follows. Catalyzes amidations at positions B, D, E, and G on adenosylcobyrinic A,C-diamide. NH(2) groups are provided by glutamine, and one molecule of ATP is hydrogenolyzed for each amidation. In Methanococcus maripaludis (strain DSM 14266 / JCM 13030 / NBRC 101832 / S2 / LL), this protein is Probable cobyric acid synthase.